The following is a 509-amino-acid chain: ATP synthase subunit alpha, mitochondrial (509 aa).

171–178 is a binding site for ATP; the sequence is GDRQTGKT.

Belongs to the ATPase alpha/beta chains family. In terms of assembly, F-type ATPases have 2 components, CF(1) - the catalytic core - and CF(0) - the membrane proton channel. CF(1) has five subunits: alpha(3), beta(3), gamma(1), delta(1), epsilon(1). CF(0) has three main subunits: a, b and c.

The protein localises to the mitochondrion. The protein resides in the mitochondrion inner membrane. Mitochondrial membrane ATP synthase (F(1)F(0) ATP synthase or Complex V) produces ATP from ADP in the presence of a proton gradient across the membrane which is generated by electron transport complexes of the respiratory chain. F-type ATPases consist of two structural domains, F(1) - containing the extramembraneous catalytic core, and F(0) - containing the membrane proton channel, linked together by a central stalk and a peripheral stalk. During catalysis, ATP synthesis in the catalytic domain of F(1) is coupled via a rotary mechanism of the central stalk subunits to proton translocation. Subunits alpha and beta form the catalytic core in F(1). Rotation of the central stalk against the surrounding alpha(3)beta(3) subunits leads to hydrolysis of ATP in three separate catalytic sites on the beta subunits. Subunit alpha does not bear the catalytic high-affinity ATP-binding sites. This is ATP synthase subunit alpha, mitochondrial (ATPA) from Nicotiana plumbaginifolia (Leadwort-leaved tobacco).